The primary structure comprises 131 residues: Hydrogenase maturation factor HypA (131 aa).

His2 is a binding site for Ni(2+). Positions 73, 76, 105, and 108 each coordinate Zn(2+).

The protein belongs to the HypA/HybF family.

Functionally, involved in the maturation of [NiFe] hydrogenases. Required for nickel insertion into the metal center of the hydrogenase. The sequence is that of Hydrogenase maturation factor HypA from Thermomicrobium roseum (strain ATCC 27502 / DSM 5159 / P-2).